The primary structure comprises 253 residues: 3-deoxy-manno-octulosonate cytidylyltransferase (253 aa).

The protein belongs to the KdsB family.

Its subcellular location is the cytoplasm. It catalyses the reaction 3-deoxy-alpha-D-manno-oct-2-ulosonate + CTP = CMP-3-deoxy-beta-D-manno-octulosonate + diphosphate. Its pathway is nucleotide-sugar biosynthesis; CMP-3-deoxy-D-manno-octulosonate biosynthesis; CMP-3-deoxy-D-manno-octulosonate from 3-deoxy-D-manno-octulosonate and CTP: step 1/1. It functions in the pathway bacterial outer membrane biogenesis; lipopolysaccharide biosynthesis. Activates KDO (a required 8-carbon sugar) for incorporation into bacterial lipopolysaccharide in Gram-negative bacteria. The chain is 3-deoxy-manno-octulosonate cytidylyltransferase from Idiomarina loihiensis (strain ATCC BAA-735 / DSM 15497 / L2-TR).